A 168-amino-acid polypeptide reads, in one-letter code: Transcription antitermination protein NusB (168 aa).

This sequence belongs to the NusB family.

In terms of biological role, involved in transcription antitermination. Required for transcription of ribosomal RNA (rRNA) genes. Binds specifically to the boxA antiterminator sequence of the ribosomal RNA (rrn) operons. This chain is Transcription antitermination protein NusB, found in Chlamydia trachomatis serovar L2 (strain ATCC VR-902B / DSM 19102 / 434/Bu).